A 631-amino-acid chain; its full sequence is Probable potassium transport system protein Kup (631 aa).

Transmembrane regions (helical) follow at residues 17-37 (IGLL…SPLY), 56-76 (ILGV…FKYM), 109-129 (MMMV…SMIT), 147-167 (GLDH…FLIQ), 174-194 (IGVL…ALGV), 215-235 (FFII…LALT), 256-276 (WFIL…ALVL), 288-308 (LLAP…ATII), 346-366 (IYIG…VIGF), 378-398 (VAVT…MLML), 403-423 (PLLA…FFAA), and 428-448 (IFQG…LMTT).

Belongs to the HAK/KUP transporter (TC 2.A.72) family.

Its subcellular location is the cell inner membrane. The enzyme catalyses K(+)(in) + H(+)(in) = K(+)(out) + H(+)(out). Functionally, transport of potassium into the cell. Likely operates as a K(+):H(+) symporter. The polypeptide is Probable potassium transport system protein Kup (Pseudomonas savastanoi pv. phaseolicola (strain 1448A / Race 6) (Pseudomonas syringae pv. phaseolicola (strain 1448A / Race 6))).